Here is a 446-residue protein sequence, read N- to C-terminus: Hepatocyte nuclear factor 4-beta (446 aa).

The segment at residues 47 to 122 (NSFCAICGDR…AGMKKEAVQN (76 aa)) is a DNA-binding region (nuclear receptor). 2 NR C4-type zinc fingers span residues 50–70 (CAIC…CDGC) and 86–110 (CRFS…LRKC). The 230-residue stretch at 137–366 (NGSLSINVLT…SLLQELLLGG (230 aa)) folds into the NR LBD domain.

It belongs to the nuclear hormone receptor family. NR2 subfamily. In terms of assembly, homodimerization is required for HNF4-alpha to bind to its recognition site. Expressed in liver, kidney, stomach, intestine, lung, ovary, and testis. Not expressed in fat, muscle and brain.

It is found in the nucleus. Transcription factor; binds and activates the promoter for the HNF1-alpha gene. Seems to have a lower DNA binding activity than HNF4-alpha and is a weaker transactivator than the alpha isoform. This Xenopus laevis (African clawed frog) protein is Hepatocyte nuclear factor 4-beta (hnf4b).